The chain runs to 191 residues: Ribosome maturation factor RimM (191 aa).

The PRC barrel domain occupies 107–184; the sequence is EDDEWHQDDL…LVLVSPPPGL (78 aa).

It belongs to the RimM family. Binds ribosomal protein uS19.

It localises to the cytoplasm. Its function is as follows. An accessory protein needed during the final step in the assembly of 30S ribosomal subunit, possibly for assembly of the head region. Essential for efficient processing of 16S rRNA. May be needed both before and after RbfA during the maturation of 16S rRNA. It has affinity for free ribosomal 30S subunits but not for 70S ribosomes. The protein is Ribosome maturation factor RimM of Kocuria rhizophila (strain ATCC 9341 / DSM 348 / NBRC 103217 / DC2201).